The sequence spans 785 residues: E3 UFM1-protein ligase 1 homolog (785 aa).

Positions 396-416 are enriched in basic and acidic residues; sequence MKHQDVIPDKESAENKADKRD. Positions 396–473 are disordered; sequence MKHQDVIPDK…KSAGGKKGAK (78 aa). Residues 439 to 449 show a composition bias toward basic residues; that stretch reads KSTKKHARGHR.

This sequence belongs to the UFL1 family.

Functionally, E3 UFM1-protein ligase that mediates ufmylation of target proteins. This Culex quinquefasciatus (Southern house mosquito) protein is E3 UFM1-protein ligase 1 homolog.